Reading from the N-terminus, the 424-residue chain is Dihydroorotase (424 aa).

Zn(2+) is bound by residues His-60 and His-62. Substrate is bound by residues 62–64 (HFR) and Asn-94. Zn(2+) contacts are provided by Asp-151, His-178, and His-231. Asn-277 provides a ligand contact to substrate. Asp-304 contacts Zn(2+). The active site involves Asp-304. Residue His-308 coordinates substrate.

It belongs to the metallo-dependent hydrolases superfamily. DHOase family. Class I DHOase subfamily. Zn(2+) serves as cofactor.

It carries out the reaction (S)-dihydroorotate + H2O = N-carbamoyl-L-aspartate + H(+). The protein operates within pyrimidine metabolism; UMP biosynthesis via de novo pathway; (S)-dihydroorotate from bicarbonate: step 3/3. Its function is as follows. Catalyzes the reversible cyclization of carbamoyl aspartate to dihydroorotate. The polypeptide is Dihydroorotase (Clostridium acetobutylicum (strain ATCC 824 / DSM 792 / JCM 1419 / IAM 19013 / LMG 5710 / NBRC 13948 / NRRL B-527 / VKM B-1787 / 2291 / W)).